We begin with the raw amino-acid sequence, 782 residues long: MDPKESLTPPSREEIPSSVLGRERAHVMDFYKSLRGGTPVKVSAASPSLAAVSQPDSKQQRLAVDFPKGSGSNAQQPDLSKAVSLSMGLYMGETETKVMGSDLGFPQQGQISLSSGETDFRLLEESIANLSRSTSVPENPKSSASAAGPAAPAEKAFPKTHSDGAPEQPNVKGQTGTNGGNVKLFTTDQSTFDIWRKKLQDLELPSGSPGKETSESPWSSDLLIDENCLLSPLAGEEDPFLLEGSSTEDCKPLVLPDTKPKVKDNGELILPSPNSVPLPQVKTEKEDFIELCTPGVIKQEKLGPAYCQASFSGANIIGGKMSAISVHGVSTSGGQLYHYDMNTAASLSKQQEQKPLFNVIPPIPVGSENWNRCQGSGDDNLTSLGTLNFSGRSVFSNGYSSPGMRPDVSSPPSSSSAATGPPPKLCLVCSDEASGCHYGVLTCGSCKVFFKRAVEGQHNYLCAGRNDCIIDKIRRKNCPACRYRKCLQAGMNLEARKTKKKIKGIQQATTGVSQETSENSANKTIVPATLPQLTPTLVSLLEVIEPEVLYAGYDSSIPDSTWRIMTALNMLGGRQVIAAVKWAKAIPGFRNLHLDDQMTLLQYSWMFLMVFALGWRSYRQSSASLLCFAPDLVINEQRMALPCMYDQCRHMLYVSSELQRLQVSYEEYLCMKTLLLLSSVPKDGLKSQELFDEIRMTYIKELGKAIVKREGNSSQNWQRFYQLTKLLDSMHDVVENLLNYCFQTFLDKTMSIEFPEMLAEIITNQLPKYSSGNIKKLLFHQK.

The segment at 1–20 (MDPKESLTPPSREEIPSSVL) is disordered. Positions 1–425 (MDPKESLTPP…SAATGPPPKL (425 aa)) are modulating. Residue T8 is modified to Phosphothreonine. Position 24 is an omega-N-methylarginine (R24). The residue at position 46 (S46) is a Phosphoserine. The disordered stretch occupies residues 48 to 79 (SLAAVSQPDSKQQRLAVDFPKGSGSNAQQPDL). 6 positions are modified to phosphoserine: S114, S135, S142, S208, S216, and S231. Positions 130–184 (LSRSTSVPENPKSSASAAGPAAPAEKAFPKTHSDGAPEQPNVKGQTGTNGGNVKL) are disordered. Residues 140–155 (PKSSASAAGPAAPAEK) show a composition bias toward low complexity. K263 is covalently cross-linked (Glycyl lysine isopeptide (Lys-Gly) (interchain with G-Cter in SUMO2)). S272 bears the Phosphoserine mark. Residues K282 and K298 each participate in a glycyl lysine isopeptide (Lys-Gly) (interchain with G-Cter in SUMO); alternate cross-link. Residues K282 and K298 each participate in a glycyl lysine isopeptide (Lys-Gly) (interchain with G-Cter in SUMO2); alternate cross-link. Residues S312 and S410 each carry the phosphoserine modification. A Glycyl lysine isopeptide (Lys-Gly) (interchain with G-Cter in ubiquitin) cross-link involves residue K424. 2 consecutive NR C4-type zinc fingers follow at residues 426 to 446 (CLVCSDEASGCHYGVLTCGSC) and 462 to 486 (CAGRNDCIIDKIRRKNCPACRYRKC). Positions 426–491 (CLVCSDEASG…RYRKCLQAGM (66 aa)) form a DNA-binding region, nuclear receptor. K485, K497, K499, and K500 each carry N6-acetyllysine. The interval 490–782 (GMNLEARKTK…NIKKLLFHQK (293 aa)) is interaction with CLOCK. Residues 492-528 (NLEARKTKKKIKGIQQATTGVSQETSENSANKTIVPA) are hinge. One can recognise an NR LBD domain in the interval 529-763 (TLPQLTPTLV…FPEMLAEIIT (235 aa)). The tract at residues 537–702 (LVSLLEVIEP…EIRMTYIKEL (166 aa)) is interaction with CRY1. K708 is covalently cross-linked (Glycyl lysine isopeptide (Lys-Gly) (interchain with G-Cter in SUMO)).

The protein belongs to the nuclear hormone receptor family. NR3 subfamily. Heteromultimeric cytoplasmic complex with HSP90AA1, HSPA1A/HSPA1B, and FKBP5 or another immunophilin such as PPID, STIP1, or the immunophilin homolog PPP5C. Upon ligand binding FKBP5 dissociates from the complex and FKBP4 takes its place, thereby linking the complex to dynein and mediating transport to the nucleus, where the complex dissociates. Probably forms a complex composed of chaperones HSP90 and HSP70, co-chaperones CDC37, PPP5C, TSC1 and client protein TSC2, CDK4, AKT, RAF1 and NR3C1; this complex does not contain co-chaperones STIP1/HOP and PTGES3/p23. Directly interacts with UNC45A. Binds to DNA as a homodimer, and as heterodimer with NR3C2 or the retinoid X receptor. Binds STAT5A and STAT5B homodimers and heterodimers. Interacts with NRIP1, POU2F1, POU2F2 and TRIM28. Interacts with several coactivator complexes, including the SMARCA4 complex, CREBBP/EP300, TADA2L (Ada complex) and p160 coactivators such as NCOA2 and NCOA6. Interaction with BAG1 inhibits transactivation. Interacts with HEXIM1 and TGFB1I1. Interacts with NCOA1. Interacts with NCOA3, SMARCA4, SMARCC1, SMARCD1, and SMARCE1. Interacts with CLOCK, CRY1 and CRY2 in a ligand-dependent fashion. Interacts with CIART. Interacts with RWDD3. Interacts with UBE2I/UBC9 and this interaction is enhanced in the presence of RWDD3. Interacts with GRIP1. Interacts with NR4A3 (via nuclear receptor DNA-binding domain), represses transcription activity of NR4A3 on the POMC promoter Nur response element (NurRE). Directly interacts with PNRC2 to attract and form a complex with UPF1 and DCP1A; the interaction leads to rapid mRNA degradation. Interacts with GSK3B. Interacts with FNIP1 and FNIP2. Interacts (via C-terminus) with HNRNPU (via C-terminus). Interacts with MCM3AP. Interacts (via domain NR LBD) with HSP90AA1 and HSP90AB1. In the absence of hormonal ligand, interacts with TACC1. Interacts (via NR LBD domain) with ZNF764 (via KRAB domain); the interaction regulates transcription factor activity of NR3C1 by directing its actions toward certain biologic pathways. Acetylation by CLOCK reduces its binding to glucocorticoid response elements and its transcriptional activity. In terms of processing, increased proteasome-mediated degradation in response to glucocorticoids. Post-translationally, phosphorylated in the absence of hormone; becomes hyperphosphorylated in the presence of glucocorticoid. The Ser-208, Ser-231 and Ser-410-phosphorylated forms are mainly cytoplasmic, and the Ser-216-phosphorylated form is nuclear. Phosphorylation at Ser-216 increases transcriptional activity. Phosphorylation at Ser-208, Ser-231 and Ser-410 decreases signaling capacity. Phosphorylation at Ser-410 may protect from glucocorticoid-induced apoptosis. Phosphorylation at Ser-208 and Ser-216 is not required in regulation of chromosome segregation. May be dephosphorylated by PPP5C, attenuates NR3C1 action. Ubiquitinated by UBR5, leading to its degradation: UBR5 specifically recognizes and binds ligand-bound NR3C1 when it is not associated with coactivators (NCOAs). In presence of NCOAs, the UBR5-degron is not accessible, preventing its ubiquitination and degradation. In terms of processing, sumoylation at Lys-282 and Lys-298 negatively regulates its transcriptional activity. Sumoylation at Lys-708 positively regulates its transcriptional activity in the presence of RWDD3. Sumoylation at Lys-282 and Lys-298 is dispensable whereas sumoylation at Lys-708 is critical for the stimulatory effect of RWDD3 on its transcriptional activity. Heat shock increases sumoylation in a RWDD3-dependent manner.

Its subcellular location is the cytoplasm. It localises to the nucleus. The protein resides in the mitochondrion. The protein localises to the cytoskeleton. It is found in the spindle. Its subcellular location is the microtubule organizing center. It localises to the centrosome. The protein resides in the chromosome. The protein localises to the nucleoplasm. Its function is as follows. Receptor for glucocorticoids (GC). Has a dual mode of action: as a transcription factor that binds to glucocorticoid response elements (GRE), both for nuclear and mitochondrial DNA, and as a modulator of other transcription factors. Affects inflammatory responses, cellular proliferation and differentiation in target tissues. Involved in chromatin remodeling. Plays a role in rapid mRNA degradation by binding to the 5' UTR of target mRNAs and interacting with PNRC2 in a ligand-dependent manner which recruits the RNA helicase UPF1 and the mRNA-decapping enzyme DCP1A, leading to RNA decay. Could act as a coactivator for STAT5-dependent transcription upon growth hormone (GH) stimulation and could reveal an essential role of hepatic GR in the control of body growth. Mediates glucocorticoid-induced apoptosis. Promotes accurate chromosome segregation during mitosis. May act as a tumor suppressor. May play a negative role in adipogenesis through the regulation of lipolytic and antilipogenic gene expression. The polypeptide is Glucocorticoid receptor (NR3C1) (Sus scrofa (Pig)).